The primary structure comprises 186 residues: Guanylate kinase (186 aa).

Positions 5–183 (GNLTVLTGPS…AFKEIEGFMG (179 aa)) constitute a Guanylate kinase-like domain. 12–19 (GPSGVGKG) is a binding site for ATP.

This sequence belongs to the guanylate kinase family.

The protein localises to the cytoplasm. The enzyme catalyses GMP + ATP = GDP + ADP. Functionally, essential for recycling GMP and indirectly, cGMP. The polypeptide is Guanylate kinase (Prochlorococcus marinus (strain NATL2A)).